Here is a 98-residue protein sequence, read N- to C-terminus: HssA/B-like protein 33 (98 aa).

2 disordered regions span residues 1–29 and 60–98; these read MTLF…SGTS and AKSS…SCSC. A compositionally biased stretch (gly residues) spans 60–72; the sequence is AKSSGGSCGGKGG. Basic residues predominate over residues 73–88; it reads PHNHGHGNGHGPHGHG. The span at 89–98 shows a compositional bias: gly residues; that stretch reads GKGSGGSCSC.

Belongs to the hssA/B family.

The polypeptide is HssA/B-like protein 33 (hssl33) (Dictyostelium discoideum (Social amoeba)).